We begin with the raw amino-acid sequence, 398 residues long: Probable beta-1,3-galactosyltransferase 5 (398 aa).

The chain crosses the membrane as a helical; Signal-anchor for type II membrane protein span at residues 11–31; it reads LTMTWVPLLCISCFFLGAIFT. Residues N110, N115, and N206 are each glycosylated (N-linked (GlcNAc...) asparagine).

This sequence belongs to the glycosyltransferase 31 family. Mn(2+) serves as cofactor.

The protein localises to the golgi apparatus membrane. It participates in protein modification; protein glycosylation. Beta-1,3-galactosyltransferase that transfers galactose from UDP-galactose to substrates with a terminal glycosyl residue. The protein is Probable beta-1,3-galactosyltransferase 5 (B3GALT5) of Arabidopsis thaliana (Mouse-ear cress).